The following is a 282-amino-acid chain: MDNSRTRPRVGHIQFLNCLPLYWGLARTGTLLDFELTKDTPEKLSEQLVRGDLDIGPVTLVEFLKNADDLVAFPDIAVGCDGPVMSCVIVSQVPLDRLDGARVALGSTSRTSVRLAQLLLSERFGVQPDYYTCPPDLSLMMQEADAAVLIGDAALRANMIDGPRYGLDVHDLGALWKEWTGLPFVFAVWAARRDYAEREPVITRKVHEAFLASRNLSLEEVEKVAEQAARWEAFDEDTLAKYFTTLDFRFGAPQLEAVTEFARRVGPTTGFPADVKVELLKP.

This sequence belongs to the MqnA/MqnD family. MqnA subfamily.

It catalyses the reaction chorismate = 3-[(1-carboxyvinyl)-oxy]benzoate + H2O. Its pathway is quinol/quinone metabolism; menaquinone biosynthesis. Its function is as follows. Catalyzes the dehydration of chorismate into 3-[(1-carboxyvinyl)oxy]benzoate, a step in the biosynthesis of menaquinone (MK, vitamin K2). This chain is Chorismate dehydratase, found in Streptomyces coelicolor (strain ATCC BAA-471 / A3(2) / M145).